The sequence spans 218 residues: MGQKVDPRGLRLGIVRDWDAKWYAGKKDFSNLLLEDVKIRDYIKSKLLAAGISRIHIERTANRVRIAIHTAKPGVVIGRGGTEVEVLRKELEKLTGRQISINIVEIKTPELDAQLVAENVAAQLQRRVAFRRAMKQAVGRAMKLGAKGIRISVAGRLAGAEIARTEWYSEGKVPLHTLRADIDYGFSEAKTTYGKIGVKVWIYRGEILPERAAREGGR.

The KH type-2 domain maps to Ile-39–Lys-107.

The protein belongs to the universal ribosomal protein uS3 family. In terms of assembly, part of the 30S ribosomal subunit. Forms a tight complex with proteins S10 and S14.

Its function is as follows. Binds the lower part of the 30S subunit head. Binds mRNA in the 70S ribosome, positioning it for translation. The chain is Small ribosomal subunit protein uS3 from Desulforudis audaxviator (strain MP104C).